Reading from the N-terminus, the 334-residue chain is Phosphate acyltransferase (334 aa).

It belongs to the PlsX family. As to quaternary structure, homodimer. Probably interacts with PlsY.

The protein localises to the cytoplasm. It catalyses the reaction a fatty acyl-[ACP] + phosphate = an acyl phosphate + holo-[ACP]. Its pathway is lipid metabolism; phospholipid metabolism. Catalyzes the reversible formation of acyl-phosphate (acyl-PO(4)) from acyl-[acyl-carrier-protein] (acyl-ACP). This enzyme utilizes acyl-ACP as fatty acyl donor, but not acyl-CoA. This chain is Phosphate acyltransferase, found in Caldicellulosiruptor saccharolyticus (strain ATCC 43494 / DSM 8903 / Tp8T 6331).